The chain runs to 136 residues: Protein NrdI (136 aa).

This sequence belongs to the NrdI family.

Probably involved in ribonucleotide reductase function. The chain is Protein NrdI from Escherichia coli O127:H6 (strain E2348/69 / EPEC).